The primary structure comprises 181 residues: Adenine phosphoribosyltransferase (181 aa).

It belongs to the purine/pyrimidine phosphoribosyltransferase family. In terms of assembly, homodimer.

It localises to the cytoplasm. It carries out the reaction AMP + diphosphate = 5-phospho-alpha-D-ribose 1-diphosphate + adenine. It participates in purine metabolism; AMP biosynthesis via salvage pathway; AMP from adenine: step 1/1. Its function is as follows. Catalyzes a salvage reaction resulting in the formation of AMP, that is energically less costly than de novo synthesis. The sequence is that of Adenine phosphoribosyltransferase from Methylorubrum populi (strain ATCC BAA-705 / NCIMB 13946 / BJ001) (Methylobacterium populi).